The sequence spans 70 residues: DNA-directed RNA polymerase subunit omega (70 aa).

Belongs to the RNA polymerase subunit omega family. The RNAP catalytic core consists of 2 alpha, 1 beta, 1 beta' and 1 omega subunit. When a sigma factor is associated with the core the holoenzyme is formed, which can initiate transcription.

It carries out the reaction RNA(n) + a ribonucleoside 5'-triphosphate = RNA(n+1) + diphosphate. Its function is as follows. Promotes RNA polymerase assembly. Latches the N- and C-terminal regions of the beta' subunit thereby facilitating its interaction with the beta and alpha subunits. The chain is DNA-directed RNA polymerase subunit omega from Caldanaerobacter subterraneus subsp. tengcongensis (strain DSM 15242 / JCM 11007 / NBRC 100824 / MB4) (Thermoanaerobacter tengcongensis).